Consider the following 174-residue polypeptide: Crossover junction endodeoxyribonuclease RuvC (174 aa).

Residues Asp16, Glu76, and Asp148 contribute to the active site. Residues Asp16, Glu76, and Asp148 each contribute to the Mg(2+) site.

Belongs to the RuvC family. As to quaternary structure, homodimer which binds Holliday junction (HJ) DNA. The HJ becomes 2-fold symmetrical on binding to RuvC with unstacked arms; it has a different conformation from HJ DNA in complex with RuvA. In the full resolvosome a probable DNA-RuvA(4)-RuvB(12)-RuvC(2) complex forms which resolves the HJ. It depends on Mg(2+) as a cofactor.

It localises to the cytoplasm. It catalyses the reaction Endonucleolytic cleavage at a junction such as a reciprocal single-stranded crossover between two homologous DNA duplexes (Holliday junction).. In terms of biological role, the RuvA-RuvB-RuvC complex processes Holliday junction (HJ) DNA during genetic recombination and DNA repair. Endonuclease that resolves HJ intermediates. Cleaves cruciform DNA by making single-stranded nicks across the HJ at symmetrical positions within the homologous arms, yielding a 5'-phosphate and a 3'-hydroxyl group; requires a central core of homology in the junction. The consensus cleavage sequence is 5'-(A/T)TT(C/G)-3'. Cleavage occurs on the 3'-side of the TT dinucleotide at the point of strand exchange. HJ branch migration catalyzed by RuvA-RuvB allows RuvC to scan DNA until it finds its consensus sequence, where it cleaves and resolves the cruciform DNA. This is Crossover junction endodeoxyribonuclease RuvC from Rhodopseudomonas palustris (strain BisA53).